The following is a 243-amino-acid chain: MSDFLLNPFSEIAEVSVGQHFYWQLGSYEVHGQVLLVSWFVLAVIFGLSFVGNSNLKSTPDGLQNFTEFVTEFIRDLAKTQIGEEEYLKWVPYLGTVFLFIFVSNWSGALLPWALIELPNGELAAPTNDINTTVALALLTSISYFYAGIRKKGLRYFNRYVQPAAFLLPINVLEDFTKPLSLSFRLFGNILADELVVGVLVSLVPLIIPIPIMLLGCFTSAIQALVFATLAGAYIGEAVEDHH.

The next 5 membrane-spanning stretches (helical) occupy residues Gly32–Gly52, Thr96–Ile116, Asp129–Ile149, Leu195–Leu215, and Gly216–Gly236.

This sequence belongs to the ATPase A chain family. F-type ATPases have 2 components, CF(1) - the catalytic core - and CF(0) - the membrane proton channel. CF(1) has five subunits: alpha(3), beta(3), gamma(1), delta(1), epsilon(1). CF(0) has four main subunits: a, b, b' and c.

It localises to the plastid. Its subcellular location is the chloroplast thylakoid membrane. Its function is as follows. Key component of the proton channel; it plays a direct role in the translocation of protons across the membrane. This chain is ATP synthase subunit a, chloroplastic, found in Tetradesmus obliquus (Green alga).